A 179-amino-acid polypeptide reads, in one-letter code: Large ribosomal subunit protein bL9 (179 aa).

Residues 155 to 179 (KPEEAPVPVAEEPTAETEQAEVAAE) form a disordered region. The segment covering 167–179 (PTAETEQAEVAAE) has biased composition (acidic residues).

This sequence belongs to the bacterial ribosomal protein bL9 family.

Binds to the 23S rRNA. This chain is Large ribosomal subunit protein bL9, found in Porphyromonas gingivalis (strain ATCC BAA-308 / W83).